Here is a 503-residue protein sequence, read N- to C-terminus: Chromodomain Y-like protein 2 (503 aa).

Positions 7 to 67 (YEVERIVDKR…LHLSKDKRVK (61 aa)) constitute a Chromo domain. Positions 66–177 (VKSGKQAGAS…GNGSHQPDLE (112 aa)) are disordered. Positions 88 to 98 (RLSHRPLEPGK) are enriched in basic and acidic residues. Residues 101–120 (PSSHKRKRVNSPLSRPKKGS) are compositionally biased toward basic residues. Residues 130–140 (KTVSYRTTPSG) are compositionally biased toward polar residues.

As to quaternary structure, interacts (via chromo domain) with histone H3K9me3.

It localises to the nucleus. The sequence is that of Chromodomain Y-like protein 2 (Cdyl2) from Mus musculus (Mouse).